The chain runs to 205 residues: Small ribosomal subunit protein uS4 (205 aa).

The tract at residues 18–46 (NIWGRPKSPVNRREYGPGQHGQRRKGKLS) is disordered. Positions 94–157 (RRLDTVVFRA…KQLAIVLEAT (64 aa)) constitute an S4 RNA-binding domain.

This sequence belongs to the universal ribosomal protein uS4 family. Part of the 30S ribosomal subunit. Contacts protein S5. The interaction surface between S4 and S5 is involved in control of translational fidelity.

One of the primary rRNA binding proteins, it binds directly to 16S rRNA where it nucleates assembly of the body of the 30S subunit. Functionally, with S5 and S12 plays an important role in translational accuracy. The sequence is that of Small ribosomal subunit protein uS4 from Bradyrhizobium sp. (strain BTAi1 / ATCC BAA-1182).